Reading from the N-terminus, the 514-residue chain is RNA polymerase sigma factor SigA (514 aa).

The span at 135 to 159 (AAKKATAKKAAAKKTTAKKTAAKKS) shows a compositional bias: basic residues. Residues 135-205 (AAKKATAKKA…SDDDEDDAPA (71 aa)) are disordered. Positions 281–351 (LLEANLRLVV…TRAMADQART (71 aa)) are sigma-70 factor domain-2. Positions 305 to 308 (DLIQ) match the Interaction with polymerase core subunit RpoC motif. Positions 360-436 (EVINKLARVQ…DSEAVVPADA (77 aa)) are sigma-70 factor domain-3. Residues 449 to 502 (VLDTLSEREAGVVSMRFGLTDGQPKTLDEIGKVYGVTRERIRQIESKTMSKLRH) are sigma-70 factor domain-4. A DNA-binding region (H-T-H motif) is located at residues 475–494 (LDEIGKVYGVTRERIRQIES).

This sequence belongs to the sigma-70 factor family. RpoD/SigA subfamily. As to quaternary structure, interacts transiently with the RNA polymerase catalytic core.

It localises to the cytoplasm. Sigma factors are initiation factors that promote the attachment of RNA polymerase to specific initiation sites and are then released. This sigma factor is the primary sigma factor during exponential growth. The chain is RNA polymerase sigma factor SigA from Streptomyces griseus.